The primary structure comprises 456 residues: Septin-10 (456 aa).

The 267-residue stretch at 40-306 (QGFCFNILCV…ELYRRCKLQE (267 aa)) folds into the Septin-type G domain. Positions 50–57 (GETGIGKS) are G1 motif. GTP is bound by residues 50-57 (GETGIGKS), glycine 105, 186-194 (KADTISKSE), glycine 240, and arginine 255. A G3 motif region spans residues 102–105 (NTVG). The tract at residues 185–188 (AKAD) is G4 motif. Serine 418 bears the Phosphoserine mark.

It belongs to the TRAFAC class TrmE-Era-EngA-EngB-Septin-like GTPase superfamily. Septin GTPase family. In terms of assembly, septins polymerize into heterooligomeric protein complexes that form filaments, and can associate with cellular membranes, actin filaments and microtubules. GTPase activity is required for filament formation. Interacts with ADGB. Post-translationally, proteolytically cleaved in vitro in a calmodulin-dependent manner.

It localises to the cytoplasm. Its subcellular location is the cytoskeleton. It is found in the cell projection. The protein localises to the cilium. The protein resides in the flagellum. Filament-forming cytoskeletal GTPase. May play a role in cytokinesis (Potential). This Rattus norvegicus (Rat) protein is Septin-10.